The following is a 480-amino-acid chain: Cytochrome P450 724B1 (480 aa).

A helical membrane pass occupies residues 6–26 (LVLAALVILLALLLTLVLSHF). Cys426 serves as a coordination point for heme.

This sequence belongs to the cytochrome P450 family. Heme is required as a cofactor. Ubiquitously expressed at low levels, but preferentially in the internodes and the florets before flowering.

The protein resides in the membrane. It catalyses the reaction campesterol + reduced [NADPH--hemoprotein reductase] + O2 = (22S)-22-hydroxycampesterol + oxidized [NADPH--hemoprotein reductase] + H2O + H(+). The protein operates within plant hormone biosynthesis; brassinosteroid biosynthesis. In terms of biological role, involved in brassinosteroid biosynthesis. May catalyze a C6-oxidation step and may be involved to supply 6-deoxotyphasterol and typhasterol. Involved in internode elongation and seed development. Catalyzes the conversion of campesterol (CR) to (22S)-22-hydroxycampesterol (22-OHCR, 22-hydroxyCR). The chain is Cytochrome P450 724B1 from Oryza sativa subsp. japonica (Rice).